The following is a 1213-amino-acid chain: DNA-directed RNA polymerase subunit beta' (1213 aa).

Residues C60, C62, C75, and C78 each coordinate Zn(2+). Residues D449, D451, and D453 each coordinate Mg(2+). Zn(2+) is bound by residues C818, C892, C899, and C902.

It belongs to the RNA polymerase beta' chain family. As to quaternary structure, the RNAP catalytic core consists of 2 alpha, 1 beta, 1 beta' and 1 omega subunit. When a sigma factor is associated with the core the holoenzyme is formed, which can initiate transcription. Mg(2+) is required as a cofactor. Requires Zn(2+) as cofactor.

The catalysed reaction is RNA(n) + a ribonucleoside 5'-triphosphate = RNA(n+1) + diphosphate. In terms of biological role, DNA-dependent RNA polymerase catalyzes the transcription of DNA into RNA using the four ribonucleoside triphosphates as substrates. This is DNA-directed RNA polymerase subunit beta' from Lactiplantibacillus plantarum (strain ATCC BAA-793 / NCIMB 8826 / WCFS1) (Lactobacillus plantarum).